Reading from the N-terminus, the 209-residue chain is Ribosomal RNA large subunit methyltransferase E (209 aa).

Residues G63, W65, D83, D99, and D124 each coordinate S-adenosyl-L-methionine. Catalysis depends on K164, which acts as the Proton acceptor.

It belongs to the class I-like SAM-binding methyltransferase superfamily. RNA methyltransferase RlmE family.

Its subcellular location is the cytoplasm. It catalyses the reaction uridine(2552) in 23S rRNA + S-adenosyl-L-methionine = 2'-O-methyluridine(2552) in 23S rRNA + S-adenosyl-L-homocysteine + H(+). Its function is as follows. Specifically methylates the uridine in position 2552 of 23S rRNA at the 2'-O position of the ribose in the fully assembled 50S ribosomal subunit. This Shewanella sp. (strain ANA-3) protein is Ribosomal RNA large subunit methyltransferase E.